The following is a 183-amino-acid chain: Protein FAM180B (183 aa).

Residues Met-1 to Thr-23 form the signal peptide.

The protein belongs to the FAM180 family.

The protein localises to the secreted. The protein is Protein FAM180B (FAM180B) of Homo sapiens (Human).